Here is a 200-residue protein sequence, read N- to C-terminus: MLQSQPIRRKLVVVGDGACGKTSLLSVFTLGYFPTEYVPTVFENYVSDCRVDGKSVQLALWDTAGQEEYERLRPMSYAKAHIILVGFAIDSPDSLENVSTKWIEEINTLCPNVPFILVGMKADLRSDPVAIEEMRRRNQNFVKSQQAELVAQRIGARKYMECSSLTGDGVDDVFEAATRAALTVRDSENDKSSTKCCIIS.

GTP is bound at residue glycine 15–threonine 22. The Effector region motif lies at tyrosine 37–tyrosine 45. GTP-binding positions include aspartate 62–glutamine 66 and methionine 120–aspartate 123. Position 197 is a cysteine methyl ester (cysteine 197). Residue cysteine 197 is the site of S-geranylgeranyl cysteine attachment. Positions isoleucine 198–serine 200 are cleaved as a propeptide — removed in mature form.

Belongs to the small GTPase superfamily. Rho family. As to quaternary structure, interacts with pck2.

The protein resides in the cell membrane. Involved in cell morphogenesis, the maintenance of growth direction, control of polarity and of cell wall integrity. Regulates the synthesis of alpha-D-glucan through activation of pck2. This Schizosaccharomyces pombe (strain 972 / ATCC 24843) (Fission yeast) protein is GTP-binding protein rho2 (rho2).